The primary structure comprises 383 residues: MKENEVKDEKSVDVLSFKQLESQKIVLPQDLFRSSFTWFCYEIYKSLAFRIWMLLWLPLSVWWKLSNNCIYPLIVSLLVLFLGPIFVLVICGLSRKRSLSKQLIQFCKEITENTPSSDPHDWEVVVANLNSYLYENKAWNTKNFFFNATDCEKMFRTTVLEPFSLKKDKAAKVKSFKDSVPYIEEALQVYATGFDKQWKLFITEKSWSPVGLEDVQLPKDIHRSKLTWFLKRIFTIYSLPLWLAFLNCICVSQHFCLAFRILCPGLFFLMMVWLFQNMRTTALLVKMEHKMQFLLTIINEQESGANGWDEIARKMNRYLFEKKAWKNEEFFFDGIDCEWFFSHFFYRLLSAKKSMWLLPLNVELWPYIKEAQLSRNEESLMKK.

Residues 1-42 are Cytoplasmic-facing; sequence MKENEVKDEKSVDVLSFKQLESQKIVLPQDLFRSSFTWFCYE. A helical transmembrane segment spans residues 43-63; the sequence is IYKSLAFRIWMLLWLPLSVWW. Topologically, residues 64–72 are extracellular; sequence KLSNNCIYP. A helical transmembrane segment spans residues 73 to 93; the sequence is LIVSLLVLFLGPIFVLVICGL. The Cytoplasmic portion of the chain corresponds to 94 to 232; it reads SRKRSLSKQL…RSKLTWFLKR (139 aa). Residues 233 to 253 traverse the membrane as a helical segment; the sequence is IFTIYSLPLWLAFLNCICVSQ. Residue His-254 is a topological domain, extracellular. Residues 255-275 traverse the membrane as a helical segment; the sequence is FCLAFRILCPGLFFLMMVWLF. Topologically, residues 276–383 are cytoplasmic; sequence QNMRTTALLV…SRNEESLMKK (108 aa).

This sequence belongs to the DUP/COS family.

The protein resides in the membrane. The chain is Protein COS7 (COS7) from Saccharomyces cerevisiae (strain ATCC 204508 / S288c) (Baker's yeast).